Reading from the N-terminus, the 645-residue chain is MESHYELAEARWFMSKIQDYFRGGKISAGITHKLLEKLDFPCHFAHVKRIFKENDRHNQGRITTEDFRTIYRCIVHREEIVEIFNTYTENRKILPEDSLIEFLTQEQYEMEMDESSSVEIIQKYEPIAEVKNERQMSIEGFARYMFSSECLLFKETCNTVYQDMNKPLNDYYISSSHNTYLISDQILGPSDIWGYISALVKGCRCLEIDCWDGAQNEPIVYHGYTLTSKLLFKTVIQAINKYAFVTSDYPVVLSLENHCSPGQQEVMTDILQSTFGDFLLSDILDEFPDSLPSPEALKFKILVKNKKVGTLSETRERLGTDKRGIALDLEEEIYENEDEDSGKEPETWDDFLSRVKEEQEADPSTLSGIADAKKKIRKLRVALALSDLVIYTKAEKFRNFQYSRVYQQFNETTSMGESRARKLSKLRAHEFIFHTAAFITRVYPKFTRADSSNFNPQEFWNVGCQMVALNFQTPGLPMDLQNGKFLDNGGSGYVLKPDFLRDTTLGFNPNEPEGDGHPVTLTIRLISGIQLPVNVPSNTSDIIVIIEVYGVPNDHMKQQSRAVKNNAFSPRWNETFTFLIQVPELALIRFVVETQGFLSGNELLGQYTLPVLCMNKGYRRVPLFSKSGANLEPSSLFIYVWYYRE.

The EF-hand domain occupies 42 to 77 (CHFAHVKRIFKENDRHNQGRITTEDFRTIYRCIVHR). Residues 162 to 306 (QDMNKPLNDY…LKFKILVKNK (145 aa)) enclose the PI-PLC X-box domain. Active-site residues include H177 and H222. One can recognise a PI-PLC Y-box domain in the interval 385–501 (LSDLVIYTKA…GYVLKPDFLR (117 aa)). The 125-residue stretch at 501-625 (RDTTLGFNPN…KGYRRVPLFS (125 aa)) folds into the C2 domain.

Interacts via its C2 domain with PtdIns(3)P and, to a lesser extent, PtdIns(5)P in vitro. The cofactor is Ca(2+).

The protein localises to the nucleus. Its subcellular location is the cytoplasm. The protein resides in the perinuclear region. It carries out the reaction a 1,2-diacyl-sn-glycero-3-phospho-(1D-myo-inositol-4,5-bisphosphate) + H2O = 1D-myo-inositol 1,4,5-trisphosphate + a 1,2-diacyl-sn-glycerol + H(+). Functionally, the production of the second messenger molecules diacylglycerol (DAG) and inositol 1,4,5-trisphosphate (IP3) is mediated by activated phosphatidylinositol-specific phospholipase C enzymes. In vitro, hydrolyzes PtdIns(4,5)P2 in a Ca(2+)-dependent manner. Triggers intracellular Ca(2+) oscillations in oocytes solely during M phase and is involved in inducing oocyte activation and initiating embryonic development up to the blastocyst stage. Is therefore a strong candidate for the egg-activating soluble sperm factor that is transferred from the sperm into the egg cytoplasm following gamete membrane fusion. May exert an inhibitory effect on phospholipase-C-coupled processes that depend on calcium ions and protein kinase C, including CFTR trafficking and function. This Rattus norvegicus (Rat) protein is 1-phosphatidylinositol 4,5-bisphosphate phosphodiesterase zeta-1.